A 200-amino-acid polypeptide reads, in one-letter code: Serine/arginine-rich splicing factor RSZ23 (200 aa).

The RRM domain occupies Ala2–Lys71. A CCHC-type zinc finger spans residues Met86–Leu103. Residues Ile105–Ala200 form a disordered region. A compositionally biased stretch (basic residues) spans Gly113–Arg139.

The protein belongs to the splicing factor SR family. Post-translationally, extensively phosphorylated on serine residues in the RS domain. In terms of tissue distribution, expressed in roots, leaves and immature seeds.

The protein resides in the nucleus. Involved in pre-mRNA splicing. In protoplast assay, enhances splicing efficiency of WAXY intron 1 and alters the selection of the 5'-splice sites by stimulating site 1 (proximal site). The sequence is that of Serine/arginine-rich splicing factor RSZ23 (RSZ23) from Oryza sativa subsp. japonica (Rice).